The primary structure comprises 965 residues: Fibronectin-binding protein A (965 aa).

Residues 1–36 (MKNNLRYGIRKHKLGAASVFLGTMIVIGMGQDKEAA) form the signal peptide. The short motif at 7 to 18 (YGIRKHKLGAAS) is the YSIRK-G/S signaling motif element. A disordered region spans residues 37–206 (ASEQKTTTVE…VTSKVTVEDE (170 aa)). Residues 37-514 (ASEQKTTTVE…SNKANGDGKY (478 aa)) form a ligand-binding A region region. The span at 39-55 (EQKTTTVEENGNSATDN) shows a compositional bias: polar residues. A compositionally biased stretch (low complexity) spans 59 to 74 (ETQTTTTNVNTIDETQ). A compositionally biased stretch (polar residues) spans 75-92 (SYSATATEQPSNATQVTT). Residues 112-122 (TVKEEVVKEEA) are compositionally biased toward basic and acidic residues. Over residues 126–139 (VKETTQSQDNSGDQ) the composition is skewed to polar residues. The span at 179–193 (DVAEAKEASDAKVET) shows a compositional bias: basic and acidic residues. The tract at residues 194–514 (GTDVTSKVTV…SNKANGDGKY (321 aa)) is fibrinogen/elastin/tropoelastin-binding. A fibronectin-binding region spans residues 515–837 (GPIVDSNNFE…EGQQTIEEDT (323 aa)). A B-1 repeat occupies 548-577 (ENQDNTPLDIDYHTAIDGEGGYVDGYIETI). Positions 548–607 (ENQDNTPLDIDYHTAIDGEGGYVDGYIETIEETDSSAIDIDYHTAVDSEAGHVGGYTESS) are 2 X approximate tandem repeats. Residues 578 to 607 (EETDSSAIDIDYHTAVDSEAGHVGGYTESS) form a B-2 repeat. 4 disordered regions span residues 598-625 (GHVGGYTESSEESNPIDFEESTHENSKH), 743-774 (LGYEGGQNSGNQSFEEDTEEDKPKYEQGGNII), 794-903 (IEED…GKVV), and 916-942 (VAPTKQKQAKKSELPETGGEESTNKGM). One copy of the D-1; truncated repeat lies at 748-770 (GQNSGNQSFEEDTEEDKPKYEQG). Residues 748 to 839 (GQNSGNQSFE…QQTIEEDTTP (92 aa)) are 4 X approximate tandem repeats. The stretch at 771-785 (GNIIDIDFDSVPQIH) is one D-2; truncated repeat. The stretch at 786-824 (GFNKHNEIIEEDTNKDKPNYQFGGHNSVDFEEDTLPKVS) is one D-3 repeat. The segment covering 794–803 (IEEDTNKDKP) has biased composition (basic and acidic residues). Residues 825–839 (GQNEGQQTIEEDTTP) form a D-4; truncated repeat. Over residues 839 to 885 (PPTPPTPEVPSEPGTPTPPTPEVPSEPGKPTPPTPEVPAEPGKPVPP) the composition is skewed to pro residues. WR repeat units follow at residues 840-853 (PTPPTPEVPSEPGT), 854-867 (PTPPTPEVPSEPGK), 868-881 (PTPPTPEVPAEPGK), and 882-895 (PVPPAKEEPKKPSK). The 4 X tandem repeats, Pro-rich (WR) stretch occupies residues 840-895 (PTPPTPEVPSEPGTPTPPTPEVPSEPGKPTPPTPEVPAEPGKPVPPAKEEPKKPSK). Residues 929–933 (LPETG) carry the LPXTG sorting signal motif. A Pentaglycyl murein peptidoglycan amidated threonine modification is found at Thr-932. Positions 933-965 (GGEESTNKGMLFGGLFSILGLALLRRNKKNHKA) are cleaved as a propeptide — removed by sortase.

Its subcellular location is the secreted. It is found in the cell wall. Functionally, promotes bacterial attachment to multiple substrates, such as fibronectin (Fn), fibrinogen (Fg), elastin peptides and tropoelastin. This confers to S.aureus the ability to invade endothelial cells. Promotes adherence to and aggregation of activated platelets. This Staphylococcus aureus (strain MRSA252) protein is Fibronectin-binding protein A (fnbA).